We begin with the raw amino-acid sequence, 358 residues long: DNA integrity scanning protein DisA (358 aa).

The region spanning 6-144 (RPTLREAVAR…RGERHVLTDS (139 aa)) is the DAC domain. Residues Gly-73, Leu-91, and 104-108 (TRHRS) contribute to the ATP site.

The protein belongs to the DisA family. Homooctamer. Mg(2+) is required as a cofactor.

It carries out the reaction 2 ATP = 3',3'-c-di-AMP + 2 diphosphate. In terms of biological role, participates in a DNA-damage check-point. DisA forms globular foci that rapidly scan along the chromosomes searching for lesions. Also has diadenylate cyclase activity, catalyzing the condensation of 2 ATP molecules into cyclic di-AMP (c-di-AMP). c-di-AMP likely acts as a signaling molecule that may couple DNA integrity with a cellular process. This Mycobacterium tuberculosis (strain ATCC 25177 / H37Ra) protein is DNA integrity scanning protein DisA.